Consider the following 509-residue polypeptide: Heat shock 70 kDa protein 14 (509 aa).

It belongs to the heat shock protein 70 family. Component of ribosome-associated complex (RAC), a heterodimer composed of Hsp70/DnaK-type chaperone HSPA14 and Hsp40/DnaJ-type chaperone DNAJC2.

It is found in the cytoplasm. The protein localises to the cytosol. Its function is as follows. Component of the ribosome-associated complex (RAC), a complex involved in folding or maintaining nascent polypeptides in a folding-competent state. In the RAC complex, binds to the nascent polypeptide chain, while DNAJC2 stimulates its ATPase activity. In Bos taurus (Bovine), this protein is Heat shock 70 kDa protein 14 (HSPA14).